The chain runs to 258 residues: C4b-binding protein beta chain (258 aa).

The first 15 residues, 1-15, serve as a signal peptide directing secretion; it reads MLCLVVCCLIWLISA. In terms of domain architecture, Sushi 1; atypical; lacks a Cys spans 18 to 75; the sequence is GSCSEPPPVNNSVFVGKETEEQILGIYLCIKGYHLVGKKSLVFDPSKEWNSTLPECLL. Residues asparagine 27, asparagine 67, asparagine 89, asparagine 95, and asparagine 114 are each glycosylated (N-linked (GlcNAc...) asparagine). 5 disulfides stabilise this stretch: cysteine 46-cysteine 73, cysteine 78-cysteine 118, cysteine 104-cysteine 131, cysteine 136-cysteine 176, and cysteine 162-cysteine 188. 2 consecutive Sushi domains span residues 76–133 and 134–190; these read GHCP…ICRS and RDCE…TCES. N-linked (GlcNAc...) asparagine glycosylation occurs at asparagine 218.

As to quaternary structure, disulfide-linked complex of alpha and beta chains.

It localises to the secreted. Its function is as follows. Controls the classical pathway of complement activation. It binds as a cofactor to C3b/C4b inactivator (C3bINA), which then hydrolyzes the complement fragment C4b. It also accelerates the degradation of the C4bC2a complex (C3 convertase) by dissociating the complement fragment C2a. It also interacts with anticoagulant protein S and with serum amyloid P component. This Rattus norvegicus (Rat) protein is C4b-binding protein beta chain (C4bpb).